A 443-amino-acid chain; its full sequence is Mevalonate kinase (443 aa).

ATP contacts are provided by residues Lys-12, Ser-138, and 143–149; that span reads GAGLGSS. Positions 149 and 191 each coordinate Mg(2+). Asp-202 functions as the Proton acceptor in the catalytic mechanism.

This sequence belongs to the GHMP kinase family. Mevalonate kinase subfamily. In terms of assembly, homodimer. Mg(2+) is required as a cofactor.

Its subcellular location is the cytoplasm. The protein localises to the cytosol. The enzyme catalyses (R)-mevalonate + ATP = (R)-5-phosphomevalonate + ADP + H(+). It participates in isoprenoid biosynthesis; isopentenyl diphosphate biosynthesis via mevalonate pathway; isopentenyl diphosphate from (R)-mevalonate: step 1/3. Farnesyl pyrophosphate and geranyl pyrophosphate inhibit mevalonate kinase by binding competitively at the ATP-binding site. Its function is as follows. Mevalonate kinase; part of the second module of ergosterol biosynthesis pathway that includes the middle steps of the pathway. ERG12 converts mevalonate into 5-phosphomevalonate. The second module is carried out in the vacuole and involves the formation of farnesyl diphosphate, which is also an important intermediate in the biosynthesis of ubiquinone, dolichol, heme and prenylated proteins. Activity by the mevalonate kinase ERG12 first converts mevalonate into 5-phosphomevalonate. 5-phosphomevalonate is then further converted to 5-diphosphomevalonate by the phosphomevalonate kinase ERG8. The diphosphomevalonate decarboxylase MVD1/ERG19 then produces isopentenyl diphosphate. The isopentenyl-diphosphate delta-isomerase IDI1 then catalyzes the 1,3-allylic rearrangement of the homoallylic substrate isopentenyl (IPP) to its highly electrophilic allylic isomer, dimethylallyl diphosphate (DMAPP). Finally the farnesyl diphosphate synthase ERG20 catalyzes the sequential condensation of isopentenyl pyrophosphate with dimethylallyl pyrophosphate, and then with the resultant geranylpyrophosphate to the ultimate product farnesyl pyrophosphate. The sequence is that of Mevalonate kinase from Saccharomyces cerevisiae (strain ATCC 204508 / S288c) (Baker's yeast).